The chain runs to 100 residues: Thioredoxin (100 aa).

One can recognise a Thioredoxin domain in the interval 1–100 (MKHITNKAEL…PKNELKELLK (100 aa)). The cysteines at positions 29 and 32 are disulfide-linked.

This sequence belongs to the thioredoxin family.

Its function is as follows. Participates in various redox reactions through the reversible oxidation of its active center dithiol to a disulfide and catalyzes dithiol-disulfide exchange reactions. The polypeptide is Thioredoxin (trxA) (Mycoplasmoides gallisepticum (strain R(low / passage 15 / clone 2)) (Mycoplasma gallisepticum)).